A 249-amino-acid chain; its full sequence is Ribonuclease PH (249 aa).

Residues Arg-90 and 128–130 (GTR) contribute to the phosphate site.

It belongs to the RNase PH family. Homohexameric ring arranged as a trimer of dimers.

It catalyses the reaction tRNA(n+1) + phosphate = tRNA(n) + a ribonucleoside 5'-diphosphate. In terms of biological role, phosphorolytic 3'-5' exoribonuclease that plays an important role in tRNA 3'-end maturation. Removes nucleotide residues following the 3'-CCA terminus of tRNAs; can also add nucleotides to the ends of RNA molecules by using nucleoside diphosphates as substrates, but this may not be physiologically important. Probably plays a role in initiation of 16S rRNA degradation (leading to ribosome degradation) during starvation. This is Ribonuclease PH from Parasynechococcus marenigrum (strain WH8102).